We begin with the raw amino-acid sequence, 497 residues long: Aldehyde dehydrogenase (497 aa).

Residue 242-247 (GSTLVG) coordinates NAD(+). Residue E265 is the Proton acceptor of the active site. The active-site Nucleophile is C299.

It belongs to the aldehyde dehydrogenase family.

It catalyses the reaction an aldehyde + NAD(+) + H2O = a carboxylate + NADH + 2 H(+). It participates in alcohol metabolism; ethanol degradation; acetate from ethanol: step 2/2. In Aspergillus niger, this protein is Aldehyde dehydrogenase (aldA).